A 143-amino-acid chain; its full sequence is MEYQGQTGHATTDKVEEYGQPVAGHGGATGGPTGTHGAAAAAAGTGQLQPTRDDHKTDGVLRRSGSSSSSSSEDDGVGGRRKKGMKEKIKEKLPGGAHKDAAGQQHTPAAGEYAGTGTHGAEATGEKKGVMDKIKEKLPGGQH.

Over residues 1–10 the composition is skewed to polar residues; the sequence is MEYQGQTGHA. A disordered region spans residues 1–143; sequence MEYQGQTGHA…IKEKLPGGQH (143 aa). The segment covering 24 to 34 has biased composition (gly residues); that stretch reads GHGGATGGPTG. Low complexity predominate over residues 35-46; sequence THGAAAAAAGTG. The segment covering 51-61 has biased composition (basic and acidic residues); it reads TRDDHKTDGVL. Positions 62–71 are enriched in low complexity; sequence RRSGSSSSSS. Positions 86-101 are enriched in basic and acidic residues; the sequence is KEKIKEKLPGGAHKDA. Residues 109 to 123 show a composition bias toward low complexity; that stretch reads AAGEYAGTGTHGAEA. The span at 124–143 shows a compositional bias: basic and acidic residues; the sequence is TGEKKGVMDKIKEKLPGGQH.

Belongs to the plant dehydrin family.

This Hordeum vulgare (Barley) protein is Dehydrin DHN2 (DHN2).